Here is a 119-residue protein sequence, read N- to C-terminus: Fluoride-specific ion channel FluC 2 (119 aa).

2 helical membrane-spanning segments follow: residues 1–21 and 44–64; these read MIFA…ALTS and GAFF…YAFL. Glycine 70 and threonine 73 together coordinate Na(+). A helical transmembrane segment spans residues 98 to 118; it reads LLASYLGGAVLLTCGYYLGSL.

It belongs to the fluoride channel Fluc/FEX (TC 1.A.43) family.

The protein localises to the cell membrane. The catalysed reaction is fluoride(in) = fluoride(out). Na(+) is not transported, but it plays an essential structural role and its presence is essential for fluoride channel function. Functionally, fluoride-specific ion channel. Important for reducing fluoride concentration in the cell, thus reducing its toxicity. This chain is Fluoride-specific ion channel FluC 2, found in Lactobacillus delbrueckii subsp. bulgaricus (strain ATCC 11842 / DSM 20081 / BCRC 10696 / JCM 1002 / NBRC 13953 / NCIMB 11778 / NCTC 12712 / WDCM 00102 / Lb 14).